Here is a 309-residue protein sequence, read N- to C-terminus: GTP cyclohydrolase MptA 2 (309 aa).

It belongs to the GTP cyclohydrolase IV family. Homodimer. The cofactor is Fe(2+).

The enzyme catalyses GTP + H2O = 7,8-dihydroneopterin 2',3'-cyclic phosphate + formate + diphosphate + H(+). Its pathway is cofactor biosynthesis; 5,6,7,8-tetrahydromethanopterin biosynthesis. Functionally, converts GTP to 7,8-dihydro-D-neopterin 2',3'-cyclic phosphate, the first intermediate in the biosynthesis of coenzyme methanopterin. The protein is GTP cyclohydrolase MptA 2 of Methanocella arvoryzae (strain DSM 22066 / NBRC 105507 / MRE50).